Reading from the N-terminus, the 89-residue chain is Small ribosomal subunit protein uS15 (89 aa).

This sequence belongs to the universal ribosomal protein uS15 family. Part of the 30S ribosomal subunit. Forms a bridge to the 50S subunit in the 70S ribosome, contacting the 23S rRNA.

In terms of biological role, one of the primary rRNA binding proteins, it binds directly to 16S rRNA where it helps nucleate assembly of the platform of the 30S subunit by binding and bridging several RNA helices of the 16S rRNA. Functionally, forms an intersubunit bridge (bridge B4) with the 23S rRNA of the 50S subunit in the ribosome. The polypeptide is Small ribosomal subunit protein uS15 (Psychromonas ingrahamii (strain DSM 17664 / CCUG 51855 / 37)).